A 127-amino-acid chain; its full sequence is UPF0102 protein Geob_1494 (127 aa).

It belongs to the UPF0102 family.

The sequence is that of UPF0102 protein Geob_1494 from Geotalea daltonii (strain DSM 22248 / JCM 15807 / FRC-32) (Geobacter daltonii).